Here is a 387-residue protein sequence, read N- to C-terminus: LL-diaminopimelate aminotransferase (387 aa).

The substrate site is built by Tyr14 and Gly39. Pyridoxal 5'-phosphate contacts are provided by residues Tyr68, 102–103, Tyr127, Asn177, Tyr208, and 236–238; these read SK and SLS. Positions 103, 127, and 177 each coordinate substrate. Lys239 carries the N6-(pyridoxal phosphate)lysine modification. Arg247 is a binding site for pyridoxal 5'-phosphate. Residue Arg365 participates in substrate binding.

It belongs to the class-I pyridoxal-phosphate-dependent aminotransferase family. LL-diaminopimelate aminotransferase subfamily. As to quaternary structure, homodimer. Pyridoxal 5'-phosphate serves as cofactor.

The catalysed reaction is (2S,6S)-2,6-diaminopimelate + 2-oxoglutarate = (S)-2,3,4,5-tetrahydrodipicolinate + L-glutamate + H2O + H(+). It participates in amino-acid biosynthesis; L-lysine biosynthesis via DAP pathway; LL-2,6-diaminopimelate from (S)-tetrahydrodipicolinate (aminotransferase route): step 1/1. In terms of biological role, involved in the synthesis of meso-diaminopimelate (m-DAP or DL-DAP), required for both lysine and peptidoglycan biosynthesis. Catalyzes the direct conversion of tetrahydrodipicolinate to LL-diaminopimelate. This is LL-diaminopimelate aminotransferase from Aquifex aeolicus (strain VF5).